Reading from the N-terminus, the 564-residue chain is MTIEFSNFTFKYWALEKPTLKNINLTIGKGEKVVIVGPSGSGKSTLGQCLNGLIPFAVKGDCSGSLKINGKDTKSLDLHQCTNIVGTVLQDTDGQFVGLSVGEDIAFALENQMVIQEDMHTIVKDTAKMVELDDILDVSPFDLSGGQKQRVSLAGVMVDDVDILLFDEPLASLDPKTGKAAIDIIDHLHRDTGKTVIIIEHRLEDVLHRPVDRIIMMEQGEIVANMTPDQLIASDLLEQHGIREPLYISALKAAGCQITEDDKPAYFSTLNLDKFKPQIENWYHQSFVACTPENSERLLTVNNLSYSYDGIKNTLDDVSFHINKGEFVSILGKNGSGKSTITRLIMGVLEPDTGSIFMNGQDLAQSSIFERSQKIGIVLQNPNHMISHHMIFDEIASGLRNRGINEATVERKVFDILELCGLKKYRHWPIDALSYGQKKRVTIATILVLEPELLILDEPTAGQDYHHYTLMMEFVRELNRKLGITILIISHDMHLVLEYTQRAIVIANSQLLADAPVNTIFSQPALLEKANLTVTSLYSLAHAMGIERIDNFIHCFIEHEAKNK.

2 ABC transporter domains span residues 3–244 (IEFS…GIRE) and 299–533 (LTVN…ANLT). ATP is bound by residues 37 to 44 (GPSGSGKS) and 332 to 339 (GKNGSGKS).

The protein belongs to the ABC transporter superfamily.

The protein localises to the cell inner membrane. Its function is as follows. Probably part of an ABC transporter complex. Responsible for energy coupling to the transport system. This chain is Putative ABC transporter ATP-binding protein PBPRA2240, found in Photobacterium profundum (strain SS9).